Here is a 60-residue protein sequence, read N- to C-terminus: Large ribosomal subunit protein bL33 (60 aa).

This sequence belongs to the bacterial ribosomal protein bL33 family.

The chain is Large ribosomal subunit protein bL33 from Flavobacterium johnsoniae (strain ATCC 17061 / DSM 2064 / JCM 8514 / BCRC 14874 / CCUG 350202 / NBRC 14942 / NCIMB 11054 / UW101) (Cytophaga johnsonae).